We begin with the raw amino-acid sequence, 219 residues long: MKMNLAEVEIRILGCLIEKELTTPENYPLSLNTLTNACNQKSNRAPLMDLAEADVVRGLDKLGARGLARLTTTGGRVAKYRHSLDDSLHLAPPALAVLAELMLRGPQTAGELRNRAERMTPLADIASVEEILGALMEFGPPLVTRLPRQPGRKEQRYAQLFAGEPDLPDDTPAPPPEPARQRVMAENERLARLDGEVSALRAEIASLRSTIEELRVLFE.

The disordered stretch occupies residues alanine 162–glutamine 181.

The protein belongs to the UPF0502 family.

In Geotalea uraniireducens (strain Rf4) (Geobacter uraniireducens), this protein is UPF0502 protein Gura_3445.